Consider the following 576-residue polypeptide: Mitogen-activated protein kinase 15 (576 aa).

The disordered stretch occupies residues 20 to 50 (RPSSSSSSNNHDQIQNPPTVSNPNDDEDLKK). Over residues 28–42 (NNHDQIQNPPTVSNP) the composition is skewed to polar residues. One can recognise a Protein kinase domain in the interval 90–381 (YQIQEVVGKG…AEEALADPYF (292 aa)). ATP contacts are provided by residues 96–104 (VGKGSYGVV) and lysine 119. Aspartate 216 serves as the catalytic Proton acceptor. The residue at position 252 (threonine 252) is a Phosphothreonine. The TXY signature appears at 252-254 (TDY). Tyrosine 254 is subject to Phosphotyrosine. Position 257 is a phosphothreonine (threonine 257). The interval 458–535 (EENQGPGGRS…GGGYSARNLM (78 aa)) is disordered. Positions 477–501 (LPRERVPASKNETVEERSNDIERRT) are enriched in basic and acidic residues. Residues 504 to 520 (AVASTLDSPKASQQAEG) are compositionally biased toward polar residues.

Belongs to the protein kinase superfamily. CMGC Ser/Thr protein kinase family. MAP kinase subfamily. In terms of assembly, interacts with MKK7. Post-translationally, dually phosphorylated on Thr-252 and Tyr-254, which activates the enzyme.

It catalyses the reaction L-seryl-[protein] + ATP = O-phospho-L-seryl-[protein] + ADP + H(+). The enzyme catalyses L-threonyl-[protein] + ATP = O-phospho-L-threonyl-[protein] + ADP + H(+). Activated by threonine and tyrosine phosphorylation. This Arabidopsis thaliana (Mouse-ear cress) protein is Mitogen-activated protein kinase 15 (MPK15).